The sequence spans 460 residues: V-type ATP synthase beta chain (460 aa).

Belongs to the ATPase alpha/beta chains family.

Functionally, produces ATP from ADP in the presence of a proton gradient across the membrane. The V-type beta chain is a regulatory subunit. The protein is V-type ATP synthase beta chain of Acetivibrio thermocellus (strain ATCC 27405 / DSM 1237 / JCM 9322 / NBRC 103400 / NCIMB 10682 / NRRL B-4536 / VPI 7372) (Clostridium thermocellum).